The chain runs to 309 residues: Lipoyl synthase (309 aa).

Residues Cys-37, Cys-42, Cys-48, Cys-67, Cys-71, Cys-74, and Ser-281 each contribute to the [4Fe-4S] cluster site. The 218-residue stretch at 53–270 folds into the Radical SAM core domain; that stretch reads DGPGTATFML…RVAETEFGFL (218 aa).

It belongs to the radical SAM superfamily. Lipoyl synthase family. Requires [4Fe-4S] cluster as cofactor.

The protein localises to the cytoplasm. The catalysed reaction is [[Fe-S] cluster scaffold protein carrying a second [4Fe-4S](2+) cluster] + N(6)-octanoyl-L-lysyl-[protein] + 2 oxidized [2Fe-2S]-[ferredoxin] + 2 S-adenosyl-L-methionine + 4 H(+) = [[Fe-S] cluster scaffold protein] + N(6)-[(R)-dihydrolipoyl]-L-lysyl-[protein] + 4 Fe(3+) + 2 hydrogen sulfide + 2 5'-deoxyadenosine + 2 L-methionine + 2 reduced [2Fe-2S]-[ferredoxin]. The protein operates within protein modification; protein lipoylation via endogenous pathway; protein N(6)-(lipoyl)lysine from octanoyl-[acyl-carrier-protein]: step 2/2. Its function is as follows. Catalyzes the radical-mediated insertion of two sulfur atoms into the C-6 and C-8 positions of the octanoyl moiety bound to the lipoyl domains of lipoate-dependent enzymes, thereby converting the octanoylated domains into lipoylated derivatives. This chain is Lipoyl synthase, found in Natronomonas pharaonis (strain ATCC 35678 / DSM 2160 / CIP 103997 / JCM 8858 / NBRC 14720 / NCIMB 2260 / Gabara) (Halobacterium pharaonis).